The primary structure comprises 271 residues: 5-deoxy-glucuronate isomerase (271 aa).

The protein belongs to the isomerase IolB family.

The enzyme catalyses 5-deoxy-D-glucuronate = 5-dehydro-2-deoxy-D-gluconate. Its pathway is polyol metabolism; myo-inositol degradation into acetyl-CoA; acetyl-CoA from myo-inositol: step 4/7. Functionally, involved in the isomerization of 5-deoxy-glucuronate (5DG) to 5-dehydro-2-deoxy-D-gluconate (DKG or 2-deoxy-5-keto-D-gluconate). This is 5-deoxy-glucuronate isomerase from Shouchella clausii (strain KSM-K16) (Alkalihalobacillus clausii).